We begin with the raw amino-acid sequence, 476 residues long: MADMSNGEQGCGSPLELFHSIAAQGELVRDLKARNAAKDEIDSAVKMLLSLKTSYKAATGEDYKVDCPPGDPAPESGEGLDATEADEDFVDPWTVQTSSAKGIDYDKLIVRFGSSKIDKELVNRIERATGQRPHRFLRRGIFFSHRDMHQILDAYENKKPFYLYTGRGPSSEAMHVGHLIPFIFTKWLQDVFNVPLVIQMTDDEKYLWKDLTLDQAYGYAVENAKDIIACGFDINKTFIFSDLDYMGMSPGFYKNVVKIQKHVTFNQVKGIFGFTDSDCIGKISFPAIQAAPSFSNSFPQIFRDRTDVQCLIPCAIDQDPYFRMTRDVAPRIGYPKPALLHSTFFPALQGAQTKMSASDPNSSIFLTDTAKQIKTKVNKHAFSGGRDTVEEHRQFGGNCDVDVSFMYLTFFLEDDDKLEQIRRDYTSGAMLTGELKKELIEVLQPLIAEHQARRKEVTDEIVKEFMTPRKLSYDFQ.

Residues 1 to 117 are dispensable to the catalytic activity; sequence MADMSNGEQG…LIVRFGSSKI (117 aa). The 57-residue stretch at 13–69 folds into the WHEP-TRS domain; the sequence is SPLELFHSIAAQGELVRDLKARNAAKDEIDSAVKMLLSLKTSYKAATGEDYKVDCPP. The tract at residues 63 to 83 is disordered; the sequence is YKVDCPPGDPAPESGEGLDAT. At K159 the chain carries N6-succinyllysine. A 'HIGH' region motif is present at residues 169–178; sequence PSSEAMHVGH. Positions 354–358 match the 'KMSKS' region motif; that stretch reads KMSAS. S356 is modified (phosphoserine).

It belongs to the class-I aminoacyl-tRNA synthetase family. As to quaternary structure, homodimer. Interacts with oxidized form of GAPDH. Post-translationally, proteolytic cleavage generates 2 forms; T1-TrpRS and T2-TrpRS.

The protein resides in the cytoplasm. The enzyme catalyses tRNA(Trp) + L-tryptophan + ATP = L-tryptophyl-tRNA(Trp) + AMP + diphosphate + H(+). T1-TrpRS has aminoacylation activity while T2-TrpRS lacks it. T1-TrpRS and T2-TrpRS possess angiostatic activity. T2-TrpRS inhibits fluid shear stress-activated responses of endothelial cells. Regulates ERK, Akt, and eNOS activation pathways that are associated with angiogenesis, cytoskeletal reorganization and shear stress-responsive gene expression. This chain is Tryptophan--tRNA ligase, cytoplasmic (WARS1), found in Bos taurus (Bovine).